We begin with the raw amino-acid sequence, 179 residues long: ATP synthase subunit delta (179 aa).

This sequence belongs to the ATPase delta chain family. In terms of assembly, F-type ATPases have 2 components, F(1) - the catalytic core - and F(0) - the membrane proton channel. F(1) has five subunits: alpha(3), beta(3), gamma(1), delta(1), epsilon(1). F(0) has three main subunits: a(1), b(2) and c(10-14). The alpha and beta chains form an alternating ring which encloses part of the gamma chain. F(1) is attached to F(0) by a central stalk formed by the gamma and epsilon chains, while a peripheral stalk is formed by the delta and b chains.

Its subcellular location is the cell inner membrane. F(1)F(0) ATP synthase produces ATP from ADP in the presence of a proton or sodium gradient. F-type ATPases consist of two structural domains, F(1) containing the extramembraneous catalytic core and F(0) containing the membrane proton channel, linked together by a central stalk and a peripheral stalk. During catalysis, ATP synthesis in the catalytic domain of F(1) is coupled via a rotary mechanism of the central stalk subunits to proton translocation. Its function is as follows. This protein is part of the stalk that links CF(0) to CF(1). It either transmits conformational changes from CF(0) to CF(1) or is implicated in proton conduction. The chain is ATP synthase subunit delta from Burkholderia thailandensis (strain ATCC 700388 / DSM 13276 / CCUG 48851 / CIP 106301 / E264).